The sequence spans 1051 residues: Eukaryotic translation initiation factor 3 subunit A (1051 aa).

The stretch at 92–121 forms a coiled coil; the sequence is LKKFIELAEKKVTEAQAKADEIQSSLESAA. In terms of domain architecture, PCI spans 339–523; sequence MTKAASFVLL…GVLTFDTDIF (185 aa). Residues 608-905 are a coiled coil; the sequence is RVLIEKKKEA…EAEARRAARK (298 aa). Composition is skewed to basic and acidic residues over residues 617–632, 642–664, 794–901, and 916–926; these read AATDALQRKQREEETR, EAEKQRLLDEQREREKKRLRDEQ, KEVS…EARR, and AELERPVERTA. Disordered regions lie at residues 617–664 and 794–1051; these read AATD…RDEQ and KEVS…QQQQ. 2 stretches are compositionally biased toward low complexity: residues 948-961 and 1010-1039; these read KEAAGAAPAPAAAE and SSSSQPPSRTQTPPAAAPASSDKPEASPAP.

This sequence belongs to the eIF-3 subunit A family. As to quaternary structure, component of the eukaryotic translation initiation factor 3 (eIF-3) complex.

The protein localises to the cytoplasm. Its function is as follows. RNA-binding component of the eukaryotic translation initiation factor 3 (eIF-3) complex, which is involved in protein synthesis of a specialized repertoire of mRNAs and, together with other initiation factors, stimulates binding of mRNA and methionyl-tRNAi to the 40S ribosome. The eIF-3 complex specifically targets and initiates translation of a subset of mRNAs involved in cell proliferation. In Aspergillus fumigatus (strain CBS 144.89 / FGSC A1163 / CEA10) (Neosartorya fumigata), this protein is Eukaryotic translation initiation factor 3 subunit A (tif32).